The following is a 394-amino-acid chain: Teichoic acid poly(glycerol phosphate) polymerase (394 aa).

This sequence belongs to the CDP-glycerol glycerophosphotransferase family.

It localises to the cell membrane. The enzyme catalyses 4-O-[(2R)-glycerylphospho]-N-acetyl-beta-D-mannosaminyl-(1-&gt;4)-N-acetyl-alpha-D-glucosaminyl di-trans,octa-cis-undecaprenyl diphosphate + n CDP-glycerol = 4-O-{[(2R)-1-glycerylphospho](n)-(2R)-1-glycerylphospho}-N-acetyl-beta-D-mannosaminyl-(1-&gt;4)-N-acetyl-alpha-D-glucosaminyl undecaprenyl diphosphate + n CMP + n H(+). Its function is as follows. Catalyzes the addition of further 2-8 glycerol phosphate units from CDP-glycerol to the single glycerol phosphate unit bound to the prenolpyrophosphate-linked disaccharide. The function in the cell is unknown since the product is not part of the poly(ribitol phosphate) teichoic acid found in the cell walls. This Bacillus spizizenii (strain ATCC 23059 / NRRL B-14472 / W23) (Bacillus subtilis subsp. spizizenii) protein is Teichoic acid poly(glycerol phosphate) polymerase (tarF).